Here is a 400-residue protein sequence, read N- to C-terminus: MAAGGLSRSERKAAERVRRLREEQQRERLRQVSRILRKAATERSAEEGRLLAESEDLVTELQGRSRRREGLKRRQEEVCDDPEELQRKVRELASAVRNAKYLVVYTGAGISTAASIPDYRGPNGVWTLLQKGRSVSAADLSEAEPTLTHMSITRLHEQKLVQHVVSQNCDGLHLRSGLPRSAMSELHGNMYIEVCTACTPNREYVRVFDVTERTALHRHQTGRTCHKCGGQLRDTIVHFGERGTLGQPLNWEAATEAASKADTILCLGSSLKVLKKYPHLWCMTKPPSRRPKLYIVNLQWTPKDDWAALKLHGKCDDVMQLLMDELGLEIPRYSRWQDPIFSLATPLRAGEEGSHSRKSLCRSREEPGPGDRGAPLSSAPILGGWFGRGCTKRTKRKKVT.

Residues 1–28 (MAAGGLSRSERKAAERVRRLREEQQRER) form a disordered region. Over residues 8–28 (RSERKAAERVRRLREEQQRER) the composition is skewed to basic and acidic residues. In terms of domain architecture, Deacetylase sirtuin-type spans 82–329 (PEELQRKVRE…QLLMDELGLE (248 aa)). NAD(+) is bound by residues 107-126 (GAGI…NGVW) and 167-170 (QNCD). Catalysis depends on histidine 187, which acts as the Proton acceptor. The Zn(2+) site is built by cysteine 195, cysteine 198, cysteine 225, and cysteine 228. NAD(+) is bound by residues 268 to 270 (GSS), 297 to 299 (NLQ), and cysteine 315. The tract at residues 354 to 380 (SHSRKSLCRSREEPGPGDRGAPLSSAP) is disordered. An Asymmetric dimethylarginine; alternate modification is found at arginine 388. Arginine 388 is subject to Omega-N-methylarginine; alternate.

It belongs to the sirtuin family. Class IV subfamily. In terms of assembly, interacts with UBTF and the RNA polymerase I complex. Interacts with components of the B-WICH complex, such as MYBBP1A, SMARCA5/SNF2H and BAZ1B/WSTF. Interacts with ELK4, leading to stabilization at target promoters for H3K18Ac deacetylation. Interacts with histone H2A and/or histone H2B. Interacts with DNMT1. Interacts with SIRT1. Zn(2+) serves as cofactor. In terms of processing, phosphorylated during mitosis. Post-translationally, methylation at Arg-388 by PRMT6 inhibits the H3K18Ac histone deacetylase activity, promoting mitochondria biogenesis and maintaining mitochondria respiration. Ubiquitinated via 'Lys-63'-linked ubiquitin chains. Deubiquitinated by USP7, inhibiting the H3K18Ac histone deacetylase activity and regulating gluconeogenesis. Ubiquitinated by E3 ubiquitin-protein ligase complex containing FBXO7; leading to proteasomal degradation.

The protein resides in the nucleus. It is found in the nucleolus. It localises to the nucleoplasm. The protein localises to the chromosome. Its subcellular location is the cytoplasm. The catalysed reaction is N(6)-acetyl-L-lysyl-[protein] + NAD(+) + H2O = 2''-O-acetyl-ADP-D-ribose + nicotinamide + L-lysyl-[protein]. It catalyses the reaction N(6)-glutaryl-L-lysyl-[protein] + NAD(+) + H2O = 2''-O-glutaryl-ADP-D-ribose + nicotinamide + L-lysyl-[protein]. The enzyme catalyses N(6)-succinyl-L-lysyl-[protein] + NAD(+) + H2O = 2''-O-succinyl-ADP-D-ribose + nicotinamide + L-lysyl-[protein]. It carries out the reaction N(6)-propanoyl-L-lysyl-[protein] + NAD(+) + H2O = 3''-O-propanoyl-ADP-D-ribose + nicotinamide + L-lysyl-[protein]. The catalysed reaction is N(6)-decanoyl-L-lysyl-[protein] + NAD(+) + H2O = 2''-O-decanoyl-ADP-D-ribose + nicotinamide + L-lysyl-[protein]. Its activity is regulated as follows. NAD-dependent protein-lysine deacetylase and deacylase activities are activated by nucleic acids. Histone deacetylase activity is activated by DNA. Protein-lysine deacylase activity is activated by RNA. H3K18Ac histone deacetylase activity is inhibited by methylation at Arg-388. H3K18Ac histone deacetylase activity is inhibited by deubiquitination by USP7. In terms of biological role, NAD-dependent protein-lysine deacylase that can act both as a deacetylase or deacylase (desuccinylase, depropionylase, deglutarylase and dedecanoylase), depending on the context. Specifically mediates deacetylation of histone H3 at 'Lys-18' (H3K18Ac). In contrast to other histone deacetylases, displays strong preference for a specific histone mark, H3K18Ac, directly linked to control of gene expression. H3K18Ac is mainly present around the transcription start site of genes and has been linked to activation of nuclear hormone receptors; SIRT7 thereby acts as a transcription repressor. Moreover, H3K18 hypoacetylation has been reported as a marker of malignancy in various cancers and seems to maintain the transformed phenotype of cancer cells. Also able to mediate deacetylation of histone H3 at 'Lys-36' (H3K36Ac) in the context of nucleosomes. Also mediates deacetylation of non-histone proteins, such as ATM, CDK9, DDX21, DDB1, FBL, FKBP5/FKBP51, GABPB1, RAN, RRP9/U3-55K and POLR1E/PAF53. Enriched in nucleolus where it stimulates transcription activity of the RNA polymerase I complex. Acts by mediating the deacetylation of the RNA polymerase I subunit POLR1E/PAF53, thereby promoting the association of RNA polymerase I with the rDNA promoter region and coding region. In response to metabolic stress, SIRT7 is released from nucleoli leading to hyperacetylation of POLR1E/PAF53 and decreased RNA polymerase I transcription. Required to restore the transcription of ribosomal RNA (rRNA) at the exit from mitosis. Promotes pre-ribosomal RNA (pre-rRNA) cleavage at the 5'-terminal processing site by mediating deacetylation of RRP9/U3-55K, a core subunit of the U3 snoRNP complex. Mediates 'Lys-37' deacetylation of Ran, thereby regulating the nuclear export of NF-kappa-B subunit RELA/p65. Acts as a regulator of DNA damage repair by mediating deacetylation of ATM during the late stages of DNA damage response, promoting ATM dephosphorylation and deactivation. Suppresses the activity of the DCX (DDB1-CUL4-X-box) E3 ubiquitin-protein ligase complexes by mediating deacetylation of DDB1, which prevents the interaction between DDB1 and CUL4 (CUL4A or CUL4B). Activates RNA polymerase II transcription by mediating deacetylation of CDK9, thereby promoting 'Ser-2' phosphorylation of the C-terminal domain (CTD) of RNA polymerase II. Deacetylates FBL, promoting histone-glutamine methyltransferase activity of FBL. Acts as a regulator of mitochondrial function by catalyzing deacetylation of GABPB1. Regulates Akt/AKT1 activity by mediating deacetylation of FKBP5/FKBP51. Required to prevent R-loop-associated DNA damage and transcription-associated genomic instability by mediating deacetylation and subsequent activation of DDX21, thereby overcoming R-loop-mediated stalling of RNA polymerases. In addition to protein deacetylase activity, also acts as a protein-lysine deacylase. Acts as a protein depropionylase by mediating depropionylation of Osterix (SP7), thereby regulating bone formation by osteoblasts. Acts as a histone deglutarylase by mediating deglutarylation of histone H4 on 'Lys-91' (H4K91glu); a mark that destabilizes nucleosomes by promoting dissociation of the H2A-H2B dimers from nucleosomes. Acts as a histone desuccinylase: in response to DNA damage, recruited to DNA double-strand breaks (DSBs) and catalyzes desuccinylation of histone H3 on 'Lys-122' (H3K122succ), thereby promoting chromatin condensation and DSB repair. Also promotes DSB repair by promoting H3K18Ac deacetylation, regulating non-homologous end joining (NHEJ). Along with its role in DNA repair, required for chromosome synapsis during prophase I of female meiosis by catalyzing H3K18Ac deacetylation. Involved in transcriptional repression of LINE-1 retrotransposon via H3K18Ac deacetylation, and promotes their association with the nuclear lamina. Required to stabilize ribosomal DNA (rDNA) heterochromatin and prevent cellular senescence induced by rDNA instability. Acts as a negative regulator of SIRT1 by preventing autodeacetylation of SIRT1, restricting SIRT1 deacetylase activity. The sequence is that of NAD-dependent protein deacetylase sirtuin-7 (SIRT7) from Bos taurus (Bovine).